Reading from the N-terminus, the 101-residue chain is uncharacterized protein (101 aa).

A run of 2 helical transmembrane segments spans residues 3-23 (IIGS…AIIF) and 68-88 (VIVL…IIVI).

It is found in the cell membrane. This is an uncharacterized protein from Ureaplasma parvum serovar 3 (strain ATCC 700970).